Here is a 576-residue protein sequence, read N- to C-terminus: Proline--tRNA ligase (576 aa).

It belongs to the class-II aminoacyl-tRNA synthetase family. ProS type 1 subfamily. In terms of assembly, homodimer.

The protein resides in the cytoplasm. It carries out the reaction tRNA(Pro) + L-proline + ATP = L-prolyl-tRNA(Pro) + AMP + diphosphate. Its function is as follows. Catalyzes the attachment of proline to tRNA(Pro) in a two-step reaction: proline is first activated by ATP to form Pro-AMP and then transferred to the acceptor end of tRNA(Pro). As ProRS can inadvertently accommodate and process non-cognate amino acids such as alanine and cysteine, to avoid such errors it has two additional distinct editing activities against alanine. One activity is designated as 'pretransfer' editing and involves the tRNA(Pro)-independent hydrolysis of activated Ala-AMP. The other activity is designated 'posttransfer' editing and involves deacylation of mischarged Ala-tRNA(Pro). The misacylated Cys-tRNA(Pro) is not edited by ProRS. This is Proline--tRNA ligase from Bordetella petrii (strain ATCC BAA-461 / DSM 12804 / CCUG 43448).